Here is a 616-residue protein sequence, read N- to C-terminus: Proline dehydrogenase 1, mitochondrial (616 aa).

The protein belongs to the proline oxidase family. Requires FAD as cofactor.

The protein localises to the mitochondrion matrix. The enzyme catalyses L-proline + a quinone = (S)-1-pyrroline-5-carboxylate + a quinol + H(+). The protein operates within amino-acid degradation; L-proline degradation into L-glutamate; L-glutamate from L-proline: step 1/2. In terms of biological role, converts proline to delta-1-pyrroline-5-carboxylate. Through proline catabolism, promotes reactive oxygen species (ROS) production and the transcription of skn-1 target genes in response to bacterial infection by P.aeruginosa. This is Proline dehydrogenase 1, mitochondrial from Caenorhabditis elegans.